Consider the following 427-residue polypeptide: Histidine--tRNA ligase (427 aa).

This sequence belongs to the class-II aminoacyl-tRNA synthetase family. In terms of assembly, homodimer.

The protein resides in the cytoplasm. The catalysed reaction is tRNA(His) + L-histidine + ATP = L-histidyl-tRNA(His) + AMP + diphosphate + H(+). The chain is Histidine--tRNA ligase from Mannheimia succiniciproducens (strain KCTC 0769BP / MBEL55E).